The chain runs to 482 residues: Protein DETOXIFICATION 13 (482 aa).

12 consecutive transmembrane segments (helical) span residues 39–59 (LICF…LQII), 77–97 (LASS…SCAL), 124–144 (LALV…LLVF), 159–179 (AACL…TRYF), 188–208 (LLIT…LLVY), 218–238 (ALAL…LMCF), 268–288 (AAMI…SGLL), 297–317 (VLSV…AIAA), 337–357 (IVVY…STSL), 381–401 (MAPL…LSGI), 416–436 (LGAF…WIHL), and 439–459 (VGLW…LTLV).

This sequence belongs to the multi antimicrobial extrusion (MATE) (TC 2.A.66.1) family.

Its subcellular location is the membrane. This Arabidopsis thaliana (Mouse-ear cress) protein is Protein DETOXIFICATION 13.